Consider the following 327-residue polypeptide: Eukaryotic translation initiation factor 3 subunit I (327 aa).

WD repeat units lie at residues 8–49 (GHDR…GTYD), 51–91 (HNGV…NSVS), 144–183 (SLQT…DIVN), 188–227 (AHKF…CLKT), 229–268 (KAER…GHFE), and 285–324 (GHFG…LKFD).

The protein belongs to the eIF-3 subunit I family. As to quaternary structure, component of the eukaryotic translation initiation factor 3 (eIF-3) complex.

It is found in the cytoplasm. Functionally, component of the eukaryotic translation initiation factor 3 (eIF-3) complex, which is involved in protein synthesis of a specialized repertoire of mRNAs and, together with other initiation factors, stimulates binding of mRNA and methionyl-tRNAi to the 40S ribosome. The eIF-3 complex specifically targets and initiates translation of a subset of mRNAs involved in cell proliferation. The polypeptide is Eukaryotic translation initiation factor 3 subunit I (Brugia malayi (Filarial nematode worm)).